The chain runs to 242 residues: Dehydration-responsive element-binding protein 1J (242 aa).

Low complexity predominate over residues 20-29 (SSATTAATAT). A disordered region spans residues 20 to 44 (SSATTAATATGPASPKRPAGRTKFQ). Residues 50-109 (VFRGVRRRGRAGRWVCEVRVPGSRGDRLWVGTFDTAEEAARAHDAAMLALCGASASLNFA) constitute a DNA-binding region (AP2/ERF). Residues 143–184 (FQRRGSTAATATATSGDAASTAPPSSSPVLSPNDDNASSAST) form a disordered region. The segment covering 148–184 (STAATATATSGDAASTAPPSSSPVLSPNDDNASSAST) has biased composition (low complexity).

It belongs to the AP2/ERF transcription factor family. ERF subfamily.

It is found in the nucleus. Its function is as follows. Transcriptional activator that binds specifically to the DNA sequence 5'-[AG]CCGAC-3'. Binding to the C-repeat/DRE element mediates high salinity- and dehydration-inducible transcription. The chain is Dehydration-responsive element-binding protein 1J (DREB1J) from Oryza sativa subsp. japonica (Rice).